Here is a 190-residue protein sequence, read N- to C-terminus: FUN14 domain-containing protein 2 (190 aa).

The segment covering 1–13 (METSTQRTGSHLA) has biased composition (polar residues). Residues 1 to 31 (METSTQRTGSHLAQTAAARHSASSRGEAARV) form a disordered region. Residues 1–81 (METSTQRTGS…GQESGPSAEK (81 aa)) are Cytoplasmic-facing. 2 positions are modified to phosphoserine: Ser-10 and Ser-54. The chain crosses the membrane as a helical span at residues 82-102 (YSVATQLLIGGVTGWCTGFIF). The Mitochondrial intermembrane portion of the chain corresponds to 103 to 108 (QKVGKL). A helical membrane pass occupies residues 109–129 (AATAVGGGFFLLQLANHTGYI). The Cytoplasmic portion of the chain corresponds to 130–165 (KVDWQRVEKDMKKAKEQLKIRKSNQIPTEVKSKAEE). Position 152 is a phosphoserine (Ser-152). The helical transmembrane segment at 166–186 (VVSFVKKNVLVTGGFFGGFLL) threads the bilayer. At 187–190 (GMAS) the chain is on the mitochondrial intermembrane side.

The protein belongs to the FUN14 family.

It localises to the mitochondrion outer membrane. The protein localises to the nucleus. Binds directly and specifically 1,2-Diacyl-sn-glycero-3-phospho-(1'-myo-inositol-3',4',5'-bisphosphate) (PIP3) leading to the recruitment of PIP3 to mitochondria and may play a role in the regulation of the platelet activation via AKT/GSK3B/cGMP signaling pathways. May act as transcription factor that regulates SREBP1 (isoform SREBP-1C) expression in order to modulate triglyceride (TG) homeostasis in hepatocytes. The polypeptide is FUN14 domain-containing protein 2 (Bos taurus (Bovine)).